The sequence spans 142 residues: Large ribosomal subunit protein uL11 (142 aa).

This sequence belongs to the universal ribosomal protein uL11 family. Part of the ribosomal stalk of the 50S ribosomal subunit. Interacts with L10 and the large rRNA to form the base of the stalk. L10 forms an elongated spine to which L12 dimers bind in a sequential fashion forming a multimeric L10(L12)X complex. In terms of processing, one or more lysine residues are methylated.

In terms of biological role, forms part of the ribosomal stalk which helps the ribosome interact with GTP-bound translation factors. This is Large ribosomal subunit protein uL11 from Histophilus somni (strain 129Pt) (Haemophilus somnus).